Consider the following 246-residue polypeptide: Pyridoxine 5'-phosphate synthase (246 aa).

Residues Asn-8 and Arg-19 each coordinate 3-amino-2-oxopropyl phosphate. His-44 serves as the catalytic Proton acceptor. Positions 46 and 51 each coordinate 1-deoxy-D-xylulose 5-phosphate. The active-site Proton acceptor is the Glu-76. Thr-106 is a binding site for 1-deoxy-D-xylulose 5-phosphate. The Proton donor role is filled by His-198. 3-amino-2-oxopropyl phosphate-binding positions include Asp-199 and 221–222 (GH).

The protein belongs to the PNP synthase family. In terms of assembly, homooctamer; tetramer of dimers.

It localises to the cytoplasm. The enzyme catalyses 3-amino-2-oxopropyl phosphate + 1-deoxy-D-xylulose 5-phosphate = pyridoxine 5'-phosphate + phosphate + 2 H2O + H(+). Its pathway is cofactor biosynthesis; pyridoxine 5'-phosphate biosynthesis; pyridoxine 5'-phosphate from D-erythrose 4-phosphate: step 5/5. Catalyzes the complicated ring closure reaction between the two acyclic compounds 1-deoxy-D-xylulose-5-phosphate (DXP) and 3-amino-2-oxopropyl phosphate (1-amino-acetone-3-phosphate or AAP) to form pyridoxine 5'-phosphate (PNP) and inorganic phosphate. The chain is Pyridoxine 5'-phosphate synthase from Brucella suis (strain ATCC 23445 / NCTC 10510).